The chain runs to 276 residues: Ribosomal RNA small subunit methyltransferase A (276 aa).

6 residues coordinate S-adenosyl-L-methionine: histidine 15, leucine 17, glycine 42, glutamate 64, aspartate 89, and asparagine 108.

It belongs to the class I-like SAM-binding methyltransferase superfamily. rRNA adenine N(6)-methyltransferase family. RsmA subfamily.

The protein resides in the cytoplasm. It carries out the reaction adenosine(1518)/adenosine(1519) in 16S rRNA + 4 S-adenosyl-L-methionine = N(6)-dimethyladenosine(1518)/N(6)-dimethyladenosine(1519) in 16S rRNA + 4 S-adenosyl-L-homocysteine + 4 H(+). In terms of biological role, specifically dimethylates two adjacent adenosines (A1518 and A1519) in the loop of a conserved hairpin near the 3'-end of 16S rRNA in the 30S particle. May play a critical role in biogenesis of 30S subunits. The chain is Ribosomal RNA small subunit methyltransferase A from Prochlorococcus marinus (strain MIT 9312).